A 189-amino-acid polypeptide reads, in one-letter code: HGPRTase-like protein 1 (189 aa).

Belongs to the purine/pyrimidine phosphoribosyltransferase family. Archaeal HPRT subfamily.

In terms of biological role, may catalyze a purine salvage reaction, the substrate is unknown. The protein is HGPRTase-like protein 1 of Natrialba magadii (strain ATCC 43099 / DSM 3394 / CCM 3739 / CIP 104546 / IAM 13178 / JCM 8861 / NBRC 102185 / NCIMB 2190 / MS3) (Natronobacterium magadii).